The sequence spans 121 residues: Putative RNase MJ0127 (121 aa).

Catalysis depends on residues Arg-76 and His-81. Positions 76–83 (RDKLIHHY) match the RX(4)HXY motif motif. Residue Tyr-83 is modified to O-di-AMP-tyrosine.

Belongs to the HepT RNase toxin family. In terms of assembly, homodimer, probably forms a complex with cognate antitoxin MJ0128. Post-translationally, modified by cognate antitoxin MJ0128; probably at least 2 successive AMPylation events occur on Tyr-83.

In terms of biological role, probable toxic component of a putative type VII toxin-antitoxin (TA) system, probably an RNase. Probably neutralized by cognate antitoxin MJ0128. Neutralization may be due to AMPylation by MJ0128. This chain is Putative RNase MJ0127, found in Methanocaldococcus jannaschii (strain ATCC 43067 / DSM 2661 / JAL-1 / JCM 10045 / NBRC 100440) (Methanococcus jannaschii).